The chain runs to 151 residues: Large ribosomal subunit protein bL9 (151 aa).

This sequence belongs to the bacterial ribosomal protein bL9 family.

Its function is as follows. Binds to the 23S rRNA. This Nitrosomonas europaea (strain ATCC 19718 / CIP 103999 / KCTC 2705 / NBRC 14298) protein is Large ribosomal subunit protein bL9.